The primary structure comprises 408 residues: Probable cysteine desulfurase (408 aa).

Residue K225 is modified to N6-(pyridoxal phosphate)lysine.

Belongs to the class-V pyridoxal-phosphate-dependent aminotransferase family. Csd subfamily. Pyridoxal 5'-phosphate is required as a cofactor.

The enzyme catalyses (sulfur carrier)-H + L-cysteine = (sulfur carrier)-SH + L-alanine. Its function is as follows. Catalyzes the removal of elemental sulfur and selenium atoms from L-cysteine, L-cystine, L-selenocysteine, and L-selenocystine to produce L-alanine. In Mycoplasma genitalium (strain ATCC 33530 / DSM 19775 / NCTC 10195 / G37) (Mycoplasmoides genitalium), this protein is Probable cysteine desulfurase (csd).